The primary structure comprises 711 residues: MLQSMGDGEISISPYDTAWVALVEDDGGGRRQPQFPSSLEWISSNQLADGSWGDAGTFSIFDRILNTLACVVALRSWNIHPHKTEKGIWFMKKNMCRIDEENLEHMPIGFEVALPSLIDIAKKLGIDIPTQTRGLQEIYARREIKLKKIPRDIMHQAPTTLLHSLEGMAGLKWEKLLKLQSEDGSFLFSPASTAFALQQTRDHNCLKYLTNHIHKFNGGVPNVYPVDLFEHLWAVDRLQRLGLSRYFEPEIEECIAYVHRQWTEKGICWARNSQVEDIDDTAMGFRLLRLHGYEVSADVFRHFKSDGGEFFCFKGQSTQAVTGMYNLYRASQLMFPGENILVDAARFSANFLQLKRANNDLFDKWIITKDLPGEVGYALDVPWYASLPRVETRFYLDQYGGDDDVWIGKTLYRMPYVNNNKYLELAKLDYNNCQALHQQEWQNIQKWYRSCSLGEFGMTERSLLQTYYVAAASVFEPEKSQERLAWAKTAILMETITSHFEFQQLSRDQKRAFITEFEHDSILKYTNGGRYKRRSSLVGTLVRTLNHLSLDILLAHGRDIHQPLKNAWCKWLNSWEEGGDAELLVRTLNLMISGGGRRRRWASEELLSSNPKHEQLLKATIGVCDKLRLFQRRKVQGGNGCMNATGITTVEIESEMRELVKLVVTRSSSEDLDSEIKQNFLTIARSFYYAAYCNQGTINFHIAKVLFEKVL.

Lys-145 is a substrate binding site. Mg(2+) contacts are provided by Asp-277 and Asp-279. The DXDD motif motif lies at 277 to 280 (DIDD). Lys-364 lines the substrate pocket.

It belongs to the terpene synthase family. Tpsc subfamily. It depends on Mg(2+) as a cofactor.

The enzyme catalyses (2E,6E,10E)-geranylgeranyl diphosphate = ent-copalyl diphosphate. It functions in the pathway secondary metabolite biosynthesis; terpenoid biosynthesis. Functionally, involved in the biosynthesis of ent-kaurene diterpenoids natural products such as oridonin, miltiradiene, eriocalyxin B and nezukol, known to exhibit antitumor, anti-inflammatory and antibacterial activities. Catalyzes the conversion of (2E,6E,10E)-geranylgeranyl diphosphate (GGPP) to ent-copalyl diphosphate (ent-CPP). In Isodon japonicus (Scutellaria japonica), this protein is Ent-copalyl diphosphate synthase 1.